The sequence spans 250 residues: Pyrroloquinoline-quinone synthase (250 aa).

This sequence belongs to the PqqC family.

It catalyses the reaction 6-(2-amino-2-carboxyethyl)-7,8-dioxo-1,2,3,4,7,8-hexahydroquinoline-2,4-dicarboxylate + 3 O2 = pyrroloquinoline quinone + 2 H2O2 + 2 H2O + H(+). Its pathway is cofactor biosynthesis; pyrroloquinoline quinone biosynthesis. Ring cyclization and eight-electron oxidation of 3a-(2-amino-2-carboxyethyl)-4,5-dioxo-4,5,6,7,8,9-hexahydroquinoline-7,9-dicarboxylic-acid to PQQ. This is Pyrroloquinoline-quinone synthase from Xanthomonas campestris pv. campestris (strain B100).